A 484-amino-acid polypeptide reads, in one-letter code: Glycogen synthase (484 aa).

Lys-21 contacts ADP-alpha-D-glucose.

The protein belongs to the glycosyltransferase 1 family. Bacterial/plant glycogen synthase subfamily.

The enzyme catalyses [(1-&gt;4)-alpha-D-glucosyl](n) + ADP-alpha-D-glucose = [(1-&gt;4)-alpha-D-glucosyl](n+1) + ADP + H(+). It participates in glycan biosynthesis; glycogen biosynthesis. In terms of biological role, synthesizes alpha-1,4-glucan chains using ADP-glucose. The sequence is that of Glycogen synthase from Pseudomonas syringae pv. tomato (strain ATCC BAA-871 / DC3000).